Here is an 81-residue protein sequence, read N- to C-terminus: Sulfur carrier protein TusA (81 aa).

Cysteine 19 serves as the catalytic Cysteine persulfide intermediate.

It belongs to the sulfur carrier protein TusA family. As to quaternary structure, interacts with IscS.

The protein localises to the cytoplasm. It functions in the pathway tRNA modification. Sulfur carrier protein involved in sulfur trafficking in the cell. Part of a sulfur-relay system required for 2-thiolation during synthesis of 2-thiouridine of the modified wobble base 5-methylaminomethyl-2-thiouridine (mnm(5)s(2)U) in tRNA. Interacts with IscS and stimulates its cysteine desulfurase activity. Accepts an activated sulfur from IscS, which is then transferred to TusD, and thus determines the direction of sulfur flow from IscS to 2-thiouridine formation. Also appears to be involved in sulfur transfer for the biosynthesis of molybdopterin. The protein is Sulfur carrier protein TusA of Salmonella choleraesuis (strain SC-B67).